A 185-amino-acid chain; its full sequence is Sarcoplasmic calcium-binding proteins II, V, VI, and VII (185 aa).

4 EF-hand domains span residues 5–41, 57–92, 102–137, and 138–173; these read FQKQ…YKEV, SLED…TIAT, WCQN…FQLQ, and CADV…TSPA. Positions 19, 21, 23, 25, 30, 70, 72, 74, 81, 115, 117, 119, and 126 each coordinate Ca(2+).

Like parvalbumins, SCPs seem to be more abundant in fast contracting muscles, but no functional relationship can be established from this distribution. This Branchiostoma lanceolatum (Common lancelet) protein is Sarcoplasmic calcium-binding proteins II, V, VI, and VII.